The following is a 143-amino-acid chain: Transcriptional regulator MraZ (143 aa).

2 consecutive SpoVT-AbrB domains span residues 5 to 47 and 76 to 119; these read EYKH…PMHE and ATEC…SSKR.

The protein belongs to the MraZ family. Forms oligomers.

The protein resides in the cytoplasm. It is found in the nucleoid. In Halothermothrix orenii (strain H 168 / OCM 544 / DSM 9562), this protein is Transcriptional regulator MraZ.